We begin with the raw amino-acid sequence, 1138 residues long: Nuclear pore complex-interacting protein family member B4 (1138 aa).

The chain crosses the membrane as a helical span at residues 63-87; sequence VIIAFPTSYKVVITLWIVYLWVSLL. Disordered stretches follow at residues 241-263, 291-620, and 873-1138; these read NRMG…SLSL, TPLP…NIKT, and ERLR…RRLS. A compositionally biased stretch (polar residues) spans 252 to 262; sequence QQHSITDNSLS. The span at 349–359 shows a compositional bias: pro residues; sequence PLPPSALPSAP. 8 stretches are compositionally biased toward basic and acidic residues: residues 406 to 416, 448 to 458, 490 to 500, 532 to 542, 574 to 584, 908 to 918, 950 to 960, and 992 to 1002; these read DNIKTPAERLR.

This sequence belongs to the NPIP family.

It localises to the membrane. In Homo sapiens (Human), this protein is Nuclear pore complex-interacting protein family member B4 (NPIPB4).